A 296-amino-acid chain; its full sequence is Calponin-2 (296 aa).

Ser2 carries the post-translational modification N-acetylserine. N6-acetyllysine occurs at positions 8 and 25. Residues 28–132 form the Calponin-homology (CH) domain; the sequence is PQKEAELRSW…SLLALAGKAK (105 aa). Ser138 is subject to Phosphoserine. Calponin-like repeat units lie at residues 166–191, 206–231, and 245–269; these read IGLQ…RHLY, ISLQ…RHIY, and MSLQ…RQIY. Residues 275-296 are disordered; it reads PQGPAADGAPAAAGDCPGPGES.

This sequence belongs to the calponin family. Smooth muscle, and tissues containing significant amounts of smooth muscle.

Its function is as follows. Thin filament-associated protein that is implicated in the regulation and modulation of smooth muscle contraction. It is capable of binding to actin, calmodulin and tropomyosin. The interaction of calponin with actin inhibits the actomyosin Mg-ATPase activity. The polypeptide is Calponin-2 (CNN2) (Sus scrofa (Pig)).